A 504-amino-acid polypeptide reads, in one-letter code: Cytochrome P450 2K1 (504 aa).

Cysteine 447 lines the heme pocket.

Belongs to the cytochrome P450 family. Heme is required as a cofactor.

The protein resides in the endoplasmic reticulum membrane. It is found in the microsome membrane. It catalyses the reaction an organic molecule + reduced [NADPH--hemoprotein reductase] + O2 = an alcohol + oxidized [NADPH--hemoprotein reductase] + H2O + H(+). The chain is Cytochrome P450 2K1 (cyp2k1) from Oncorhynchus mykiss (Rainbow trout).